We begin with the raw amino-acid sequence, 229 residues long: Mannose-specific lectin TAR1 (229 aa).

Positions 1-23 (MAKLLLFLLPAILGLLIPRSAVA) are cleaved as a signal peptide. 2 Bulb-type lectin domains span residues 26–131 (TNYL…PWVP) and 145–229 (DNLL…DYVL). Beta-D-mannose contacts are provided by residues 51-55 (QNDCN), Tyr59, Trp63, Gln64, 170-174 (QGDCN), Tyr178, and 182-185 (YGWQ). Positions 51–59 (QNDCNLVLY) match the Carbohydrate-binding motif 1 motif. 2 cysteine pairs are disulfide-bonded: Cys54–Cys74 and Cys173–Cys195. A Carbohydrate-binding motif 2 motif is present at residues 170–178 (QGDCNLVLY).

In terms of assembly, forms heterotetramer of 2 chains 1 and 2 chains 2 arranged as a dimer of chain 1 and chain 2 heterodimers.

The protein localises to the secreted. Functionally, mannose-specific lectin. Shows agglutinating activity towards erythrocytes from rabbit. The polypeptide is Mannose-specific lectin TAR1 (Colocasia esculenta (Wild taro)).